A 177-amino-acid chain; its full sequence is N5-carboxyaminoimidazole ribonucleotide mutase (177 aa).

3 residues coordinate substrate: S18, D21, and R48.

Belongs to the AIR carboxylase family. Class I subfamily.

The catalysed reaction is 5-carboxyamino-1-(5-phospho-D-ribosyl)imidazole + H(+) = 5-amino-1-(5-phospho-D-ribosyl)imidazole-4-carboxylate. It functions in the pathway purine metabolism; IMP biosynthesis via de novo pathway; 5-amino-1-(5-phospho-D-ribosyl)imidazole-4-carboxylate from 5-amino-1-(5-phospho-D-ribosyl)imidazole (N5-CAIR route): step 2/2. Catalyzes the conversion of N5-carboxyaminoimidazole ribonucleotide (N5-CAIR) to 4-carboxy-5-aminoimidazole ribonucleotide (CAIR). This chain is N5-carboxyaminoimidazole ribonucleotide mutase, found in Pyrococcus horikoshii (strain ATCC 700860 / DSM 12428 / JCM 9974 / NBRC 100139 / OT-3).